The chain runs to 245 residues: Nodulation protein G (245 aa).

11–35 is a binding site for NAD(+); the sequence is VTGASGGIGEAIARVLHAQGAIVGL. A substrate-binding site is contributed by Ser139. Catalysis depends on Tyr152, which acts as the Proton acceptor.

The protein belongs to the short-chain dehydrogenases/reductases (SDR) family.

In terms of biological role, proposed to modify Nod factor fatty acyl chain. This chain is Nodulation protein G (nodG), found in Rhizobium sp. (strain N33).